A 475-amino-acid polypeptide reads, in one-letter code: Ribosomal RNA small subunit methyltransferase F (475 aa).

Residues 125–131 (AAAPGSK), Glu-149, Asp-176, and Asp-194 contribute to the S-adenosyl-L-methionine site. Catalysis depends on Cys-247, which acts as the Nucleophile.

Belongs to the class I-like SAM-binding methyltransferase superfamily. RsmB/NOP family.

It localises to the cytoplasm. The enzyme catalyses cytidine(1407) in 16S rRNA + S-adenosyl-L-methionine = 5-methylcytidine(1407) in 16S rRNA + S-adenosyl-L-homocysteine + H(+). Its function is as follows. Specifically methylates the cytosine at position 1407 (m5C1407) of 16S rRNA. The polypeptide is Ribosomal RNA small subunit methyltransferase F (Aeromonas hydrophila subsp. hydrophila (strain ATCC 7966 / DSM 30187 / BCRC 13018 / CCUG 14551 / JCM 1027 / KCTC 2358 / NCIMB 9240 / NCTC 8049)).